The chain runs to 235 residues: tRNA (guanine-N(1)-)-methyltransferase (235 aa).

Residues Gly-113 and Ile-133 to Leu-138 contribute to the S-adenosyl-L-methionine site.

This sequence belongs to the RNA methyltransferase TrmD family. In terms of assembly, homodimer.

Its subcellular location is the cytoplasm. The enzyme catalyses guanosine(37) in tRNA + S-adenosyl-L-methionine = N(1)-methylguanosine(37) in tRNA + S-adenosyl-L-homocysteine + H(+). Functionally, specifically methylates guanosine-37 in various tRNAs. The polypeptide is tRNA (guanine-N(1)-)-methyltransferase (Wolbachia sp. subsp. Brugia malayi (strain TRS)).